Consider the following 275-residue polypeptide: Uroplakin-3b (275 aa).

A signal peptide spans methionine 1–serine 26. The Lumenal portion of the chain corresponds to leucine 27 to cysteine 196. Asparagine 77 carries an N-linked (GlcNAc...) asparagine glycan. The chain crosses the membrane as a helical span at residues methionine 197–alanine 217. Over alanine 218–proline 275 the chain is Cytoplasmic.

This sequence belongs to the uroplakin-3 family. In terms of assembly, heterodimer with uroplakin-1B (UPK1B). In terms of tissue distribution, expression is urothelium-specific.

The protein localises to the cell membrane. Component of the asymmetric unit membrane (AUM); a highly specialized biomembrane elaborated by terminally differentiated urothelial cells. May play an important role in AUM-cytoskeleton interaction in terminally differentiated urothelial cells. It also contributes to the formation of urothelial glycocalyx which may play an important role in preventing bacterial adherence. This is Uroplakin-3b (Upk3b) from Mus musculus (Mouse).